The primary structure comprises 232 residues: Ribose-5-phosphate isomerase A (232 aa).

Residues 28–31 (TGST), 83–86 (DGAD), and 96–99 (KGGG) contribute to the substrate site. Glu105 (proton acceptor) is an active-site residue. Residue Lys123 participates in substrate binding.

Belongs to the ribose 5-phosphate isomerase family. Homodimer.

The catalysed reaction is aldehydo-D-ribose 5-phosphate = D-ribulose 5-phosphate. It functions in the pathway carbohydrate degradation; pentose phosphate pathway; D-ribose 5-phosphate from D-ribulose 5-phosphate (non-oxidative stage): step 1/1. In terms of biological role, catalyzes the reversible conversion of ribose-5-phosphate to ribulose 5-phosphate. This chain is Ribose-5-phosphate isomerase A, found in Nitrobacter hamburgensis (strain DSM 10229 / NCIMB 13809 / X14).